Here is a 393-residue protein sequence, read N- to C-terminus: Elongation factor Tu (393 aa).

The tr-type G domain maps to 10 to 202 (KPHVNIGTIG…AVDEYIPTPE (193 aa)). A G1 region spans residues 19–26 (GHVDHGKT). 19–26 (GHVDHGKT) lines the GTP pocket. Threonine 26 lines the Mg(2+) pocket. The G2 stretch occupies residues 60–64 (GITIN). The segment at 81 to 84 (DCPG) is G3. Residues 81 to 85 (DCPGH) and 136 to 139 (NKAD) each bind GTP. A G4 region spans residues 136–139 (NKAD). Positions 174–176 (SAL) are G5.

The protein belongs to the TRAFAC class translation factor GTPase superfamily. Classic translation factor GTPase family. EF-Tu/EF-1A subfamily. Monomer.

The protein resides in the cytoplasm. It catalyses the reaction GTP + H2O = GDP + phosphate + H(+). Its function is as follows. GTP hydrolase that promotes the GTP-dependent binding of aminoacyl-tRNA to the A-site of ribosomes during protein biosynthesis. This chain is Elongation factor Tu, found in Clostridium novyi (strain NT).